A 346-amino-acid polypeptide reads, in one-letter code: MIIMDYLKILEDLVKIRTDNRIGVKKAFKYLSNLFNNLGIKNTIIEGCFVAYKEKENFDLILNSHIDTVKIQSNFKKDDNNFYGTGVIDAKGNVVLMIHAFLNSNNSLLVISPDEETESNGIYNFCQYLRNKNKIQRGIKCIVGEPTDLNVCIGHKGRFEYIVESFGEARHASSQGLNPIEILSRVILDLKNLPLEKIKVDKIYSSSITPTIIKGGIQSNIIPDYAYVLFDVRSVEKDIIKKIDDFLSQKNYSKHIKSSLNPERHYANFYMLENKELINKLSKHFKISFFNATCEAYYFNKFLKADTIIYGVGKLELAHSKEEYLNLNDFDRGIKEVEKLAELMIE.

Histidine 65 contacts Zn(2+). Residue aspartate 67 is part of the active site. Aspartate 89 lines the Zn(2+) pocket. Glutamate 115 acts as the Proton acceptor in catalysis. Residues glutamate 116, glutamate 145, and histidine 319 each coordinate Zn(2+).

It belongs to the peptidase M20A family. It depends on Zn(2+) as a cofactor. The cofactor is Co(2+).

This is an uncharacterized protein from Methanocaldococcus jannaschii (strain ATCC 43067 / DSM 2661 / JAL-1 / JCM 10045 / NBRC 100440) (Methanococcus jannaschii).